The primary structure comprises 244 residues: Glutathione-independent glyoxalase hsp3101 (244 aa).

Catalysis depends on residues C139, H140, and E173.

The protein belongs to the peptidase C56 family. HSP31-like subfamily.

The protein localises to the cytoplasm. It localises to the nucleus. The enzyme catalyses methylglyoxal + H2O = (R)-lactate + H(+). Functionally, catalyzes the conversion of methylglyoxal (MG) to D-lactate in a single glutathione (GSH)-independent step. May play a role in detoxifying endogenously produced glyoxals. Involved in protection against reactive oxygen species (ROS). The sequence is that of Glutathione-independent glyoxalase hsp3101 from Schizosaccharomyces pombe (strain 972 / ATCC 24843) (Fission yeast).